Here is a 261-residue protein sequence, read N- to C-terminus: 3'-5' ssDNA/RNA exonuclease TatD (261 aa).

A divalent metal cation-binding residues include Glu92, His128, and His153.

This sequence belongs to the metallo-dependent hydrolases superfamily. TatD-type hydrolase family. TatD subfamily. Monomer. It depends on Mg(2+) as a cofactor.

It is found in the cytoplasm. Its function is as follows. 3'-5' exonuclease that prefers single-stranded DNA and RNA. May play a role in the H(2)O(2)-induced DNA damage repair. This chain is 3'-5' ssDNA/RNA exonuclease TatD, found in Erwinia billingiae (strain Eb661).